Reading from the N-terminus, the 217-residue chain is 3,4-dihydroxy-2-butanone 4-phosphate synthase (217 aa).

Residues 37–38, aspartate 42, 150–154, and glutamate 174 each bind D-ribulose 5-phosphate; these read RE and RQGHT. Position 38 (glutamate 38) interacts with Mg(2+). Mg(2+) is bound at residue histidine 153.

Belongs to the DHBP synthase family. As to quaternary structure, homodimer. Mg(2+) serves as cofactor. The cofactor is Mn(2+).

The enzyme catalyses D-ribulose 5-phosphate = (2S)-2-hydroxy-3-oxobutyl phosphate + formate + H(+). The protein operates within cofactor biosynthesis; riboflavin biosynthesis; 2-hydroxy-3-oxobutyl phosphate from D-ribulose 5-phosphate: step 1/1. Catalyzes the conversion of D-ribulose 5-phosphate to formate and 3,4-dihydroxy-2-butanone 4-phosphate. The chain is 3,4-dihydroxy-2-butanone 4-phosphate synthase from Photorhabdus laumondii subsp. laumondii (strain DSM 15139 / CIP 105565 / TT01) (Photorhabdus luminescens subsp. laumondii).